Reading from the N-terminus, the 673-residue chain is Probable potassium transport system protein Kup 1 (673 aa).

The next 13 membrane-spanning stretches (helical) occupy residues 14–34, 58–78, 101–121, 147–167, 175–195, 196–216, 220–240, 252–272, 294–314, 345–365, 374–394, 403–423, and 427–447; these read GAGF…SPLY, LSLI…WIAL, WLII…ALTP, LPIV…QRFG, FGPV…INLF, GDFS…LLSP, AGIF…ALYS, VSWP…AAWL, LIIF…QALI, LYIP…VVYF, AYGL…TVYL, VFVV…FAAS, and FLHG…VMAI.

This sequence belongs to the HAK/KUP transporter (TC 2.A.72) family.

It is found in the cell membrane. The catalysed reaction is K(+)(in) + H(+)(in) = K(+)(out) + H(+)(out). Its function is as follows. Transport of potassium into the cell. Likely operates as a K(+):H(+) symporter. This Lactococcus lactis subsp. cremoris (strain SK11) protein is Probable potassium transport system protein Kup 1.